Reading from the N-terminus, the 496-residue chain is Protein RepS (496 aa).

Residues 120-141 (SDILTTAIDLGFMPTLIIKSDK) mediate DNA binding.

Its function is as follows. Essential for replication. The polypeptide is Protein RepS (repS) (Streptococcus pyogenes).